Here is a 360-residue protein sequence, read N- to C-terminus: Phospho-N-acetylmuramoyl-pentapeptide-transferase (360 aa).

The next 10 membrane-spanning stretches (helical) occupy residues 27-47, 69-89, 93-113, 134-154, 168-188, 199-219, 239-259, 262-282, 288-308, and 337-357; these read GAFLTALIFGFVFGKPLINVL, VGTPTMGGLLIVGALLFSTLM, WDNPFVWLVLFVTMSFGLIGF, LLLGFVIAIVAALWASWNHPA, VLLNLGYLYVPFCICVIVGAA, GLAIMPVMIAAGTLGIIAYAV, ILIFTSALFGGGLGFLWYNAP, AVFMGDTGSLALGGALGAIAI, LVLAIVGGLFVVEALSVIIQV, and TIVIRFWIISLILAMIGLATL.

The protein belongs to the glycosyltransferase 4 family. MraY subfamily. The cofactor is Mg(2+).

The protein resides in the cell inner membrane. It carries out the reaction UDP-N-acetyl-alpha-D-muramoyl-L-alanyl-gamma-D-glutamyl-meso-2,6-diaminopimeloyl-D-alanyl-D-alanine + di-trans,octa-cis-undecaprenyl phosphate = di-trans,octa-cis-undecaprenyl diphospho-N-acetyl-alpha-D-muramoyl-L-alanyl-D-glutamyl-meso-2,6-diaminopimeloyl-D-alanyl-D-alanine + UMP. It functions in the pathway cell wall biogenesis; peptidoglycan biosynthesis. In terms of biological role, catalyzes the initial step of the lipid cycle reactions in the biosynthesis of the cell wall peptidoglycan: transfers peptidoglycan precursor phospho-MurNAc-pentapeptide from UDP-MurNAc-pentapeptide onto the lipid carrier undecaprenyl phosphate, yielding undecaprenyl-pyrophosphoryl-MurNAc-pentapeptide, known as lipid I. This Ruegeria sp. (strain TM1040) (Silicibacter sp.) protein is Phospho-N-acetylmuramoyl-pentapeptide-transferase.